We begin with the raw amino-acid sequence, 327 residues long: Geranylgeranyl transferase type-2 subunit alpha (327 aa).

PFTA repeat units lie at residues 44 to 78 (YSIE…SLAS), 84 to 118 (FWDK…HYPT), 123 to 157 (VWQT…NIES), 163 to 197 (LDKE…RMFQ), and 207 to 241 (YIRT…NDIV).

Belongs to the protein prenyltransferase subunit alpha family. Heterodimer of an alpha and a beta subunit.

The catalysed reaction is geranylgeranyl diphosphate + L-cysteinyl-[protein] = S-geranylgeranyl-L-cysteinyl-[protein] + diphosphate. Catalyzes the transfer of a geranyl-geranyl moiety from geranyl-geranyl pyrophosphate to proteins having the C-terminal -XCC or -XCXC, where both cysteines may become modified. Acts on YPT1 and SEC4. This chain is Geranylgeranyl transferase type-2 subunit alpha (BET4), found in Saccharomyces cerevisiae (strain ATCC 204508 / S288c) (Baker's yeast).